We begin with the raw amino-acid sequence, 320 residues long: Nucleotide-binding protein Pcryo_0127 (320 aa).

32–39 (GRSGSGKT) contributes to the ATP binding site. 82 to 85 (DIRT) is a GTP binding site.

The protein belongs to the RapZ-like family.

In terms of biological role, displays ATPase and GTPase activities. This chain is Nucleotide-binding protein Pcryo_0127, found in Psychrobacter cryohalolentis (strain ATCC BAA-1226 / DSM 17306 / VKM B-2378 / K5).